Here is a 513-residue protein sequence, read N- to C-terminus: Probable helicase MJ1565 (513 aa).

ATP contacts are provided by residues Arg-151, 160-165 (GMGKSN), and 467-468 (KV).

The protein belongs to the HerA family.

It catalyses the reaction Couples ATP hydrolysis with the unwinding of duplex DNA at the replication fork by translocating in the 5'-3' direction. This creates two antiparallel DNA single strands (ssDNA). The leading ssDNA polymer is the template for DNA polymerase III holoenzyme which synthesizes a continuous strand.. The catalysed reaction is ATP + H2O = ADP + phosphate + H(+). The enzyme catalyses Couples ATP hydrolysis with the unwinding of duplex DNA by translocating in the 3'-5' direction.. Its function is as follows. A probably bidirectional DNA helicase. The protein is Probable helicase MJ1565 of Methanocaldococcus jannaschii (strain ATCC 43067 / DSM 2661 / JAL-1 / JCM 10045 / NBRC 100440) (Methanococcus jannaschii).